The primary structure comprises 413 residues: Corticotropin-releasing factor receptor 2 (413 aa).

Residues 1–22 (MDSTIFEIIIDEFDANCSLLDA) constitute a signal peptide (not cleaved). At 1–110 (MDSTIFEIII…CVPILDNKRK (110 aa)) the chain is on the extracellular side. Residue N16 is glycosylated (N-linked (GlcNAc...) asparagine). 3 disulfide bridges follow: C17–C53, C43–C86, and C67–C101. Residues N77, N89, and N97 are each glycosylated (N-linked (GlcNAc...) asparagine). A helical transmembrane segment spans residues 111–141 (YALHYKIALIINYLGHCISILALVIAFLLFL). Topologically, residues 142 to 148 (CLRSIRC) are cytoplasmic. The chain crosses the membrane as a helical span at residues 149 to 173 (LRNIIHWNLITTFILRNIMWFLLQM). At 174–187 (IDHNIHESNEVWCR) the chain is on the extracellular side. C186 and C256 form a disulfide bridge. Residues 188–216 (CITTIYNYFVVTNFFWMFVEGCYLHTAIV) form a helical membrane-spanning segment. At 217 to 223 (MTYSTDK) the chain is on the cytoplasmic side. A helical transmembrane segment spans residues 224-251 (LRKWVFLFIGWCIPSPIIVTWAICKLFY). Residues 252 to 267 (ENEQCWIGKEPGKYID) are Extracellular-facing. A helical transmembrane segment spans residues 268–293 (YIYQGRVILVLLINFVFLFNIVRILM). Over 294-304 (TKLRASTTSET) the chain is Cytoplasmic. The helical transmembrane segment at 305-329 (IQYRKAVKATLVLLPLLGITYMLFF) threads the bilayer. Residues 330-336 (VNPGEDD) lie on the Extracellular side of the membrane. The helical transmembrane segment at 337–366 (VSQIVFIYFNSFLQSFQGFFVSVFYCFLNG) threads the bilayer. Over 367–413 (EVRSAARKRWHRWQDHHSLRVRVARAMSIPTSPTRISFHSIKQTAAV) the chain is Cytoplasmic.

This sequence belongs to the G-protein coupled receptor 2 family. In terms of processing, a N-glycosylation site within the signal peptide impedes its proper cleavage and function.

It localises to the cell membrane. Functionally, G-protein coupled receptor for CRH (corticotropin-releasing factor), UCN (urocortin), UCN2 and UCN3. Has high affinity for UCN. Ligand binding causes a conformation change that triggers signaling via guanine nucleotide-binding proteins (G proteins) and down-stream effectors, such as adenylate cyclase. Promotes the activation of adenylate cyclase, leading to increased intracellular cAMP levels. The sequence is that of Corticotropin-releasing factor receptor 2 (crhr2) from Xenopus laevis (African clawed frog).